The primary structure comprises 232 residues: RNA chaperone ProQ (232 aa).

Residues Glu105–Asp182 form a disordered region. The segment covering Gln117–Arg136 has biased composition (basic and acidic residues). Residues Arg137–Pro146 are compositionally biased toward basic residues. Basic and acidic residues predominate over residues Arg147–His177.

The protein belongs to the ProQ family.

Its subcellular location is the cytoplasm. RNA chaperone with significant RNA binding, RNA strand exchange and RNA duplexing activities. May regulate ProP activity through an RNA-based, post-transcriptional mechanism. This chain is RNA chaperone ProQ, found in Shigella boydii serotype 18 (strain CDC 3083-94 / BS512).